Reading from the N-terminus, the 483-residue chain is Glutamate--tRNA ligase (483 aa).

The short motif at 9–19 (PSPTGFLHIGN) is the 'HIGH' region element. Positions 253–257 (KLSKR) match the 'KMSKS' region motif. Position 256 (Lys256) interacts with ATP.

Belongs to the class-I aminoacyl-tRNA synthetase family. Glutamate--tRNA ligase type 1 subfamily. In terms of assembly, monomer.

It localises to the cytoplasm. It catalyses the reaction tRNA(Glu) + L-glutamate + ATP = L-glutamyl-tRNA(Glu) + AMP + diphosphate. In terms of biological role, catalyzes the attachment of glutamate to tRNA(Glu) in a two-step reaction: glutamate is first activated by ATP to form Glu-AMP and then transferred to the acceptor end of tRNA(Glu). The polypeptide is Glutamate--tRNA ligase (Mycoplasma mycoides subsp. mycoides SC (strain CCUG 32753 / NCTC 10114 / PG1)).